A 201-amino-acid chain; its full sequence is Probable cobalt-precorrin-6B C(15)-methyltransferase (decarboxylating) (201 aa).

Residues Thr-28, 52–56 (GTGTG), Asp-76, and Ala-105 contribute to the S-adenosyl-L-methionine site.

The protein belongs to the methyltransferase superfamily. Archaeal-type CbiT family.

The catalysed reaction is Co-precorrin-6B + S-adenosyl-L-methionine = Co-precorrin-7 + S-adenosyl-L-homocysteine + CO2. Its pathway is cofactor biosynthesis; adenosylcobalamin biosynthesis; cob(II)yrinate a,c-diamide from sirohydrochlorin (anaerobic route): step 8/10. Catalyzes the methylation of C-15 in cobalt-precorrin-6B followed by the decarboxylation of C-12 to form cobalt-precorrin-7. The protein is Probable cobalt-precorrin-6B C(15)-methyltransferase (decarboxylating) of Thermoplasma volcanium (strain ATCC 51530 / DSM 4299 / JCM 9571 / NBRC 15438 / GSS1).